Reading from the N-terminus, the 382-residue chain is Anthranilate O-methyltransferase 1 (382 aa).

Tyrosine 20 provides a ligand contact to S-adenosyl-L-homocysteine. Glutamine 27 contributes to the anthranilate binding site. The S-adenosyl-L-homocysteine site is built by cysteine 61, asparagine 66, aspartate 102, leucine 103, serine 146, and tyrosine 147. Position 168 (tryptophan 168) interacts with anthranilate. The Mg(2+) site is built by glutamate 268 and phenylalanine 270.

This sequence belongs to the methyltransferase superfamily. Type-7 methyltransferase family. SABATH subfamily.

The enzyme catalyses anthranilate + S-adenosyl-L-methionine = O-methyl anthranilate + S-adenosyl-L-homocysteine. Its function is as follows. Methyltransferase involved in the biosynthesis of methyl anthranilate in response to stresses. Utilizes anthranilic acid as substrate, but not salicylic acid. Produces exclusively the O-methyl ester. This Zea mays (Maize) protein is Anthranilate O-methyltransferase 1 (AAMT1).